Reading from the N-terminus, the 249-residue chain is 23S rRNA (guanosine-2'-O-)-methyltransferase RlmB (249 aa).

Gly200, Ile220, and Leu229 together coordinate S-adenosyl-L-methionine.

The protein belongs to the class IV-like SAM-binding methyltransferase superfamily. RNA methyltransferase TrmH family. RlmB subfamily.

It is found in the cytoplasm. The enzyme catalyses guanosine(2251) in 23S rRNA + S-adenosyl-L-methionine = 2'-O-methylguanosine(2251) in 23S rRNA + S-adenosyl-L-homocysteine + H(+). Specifically methylates the ribose of guanosine 2251 in 23S rRNA. This chain is 23S rRNA (guanosine-2'-O-)-methyltransferase RlmB, found in Xylella fastidiosa (strain Temecula1 / ATCC 700964).